The following is a 299-amino-acid chain: Recombination-associated protein RdgC (299 aa).

It belongs to the RdgC family.

The protein localises to the cytoplasm. It localises to the nucleoid. In terms of biological role, may be involved in recombination. The polypeptide is Recombination-associated protein RdgC (Bordetella parapertussis (strain 12822 / ATCC BAA-587 / NCTC 13253)).